Reading from the N-terminus, the 231-residue chain is Flagellar L-ring protein (231 aa).

The first 20 residues, 1-20, serve as a signal peptide directing secretion; that stretch reads MTYRRIPLYLSCLFLLALSG. A lipid anchor (N-palmitoyl cysteine) is attached at Cys21. Residue Cys21 is the site of S-diacylglycerol cysteine attachment.

Belongs to the FlgH family. In terms of assembly, the basal body constitutes a major portion of the flagellar organelle and consists of four rings (L,P,S, and M) mounted on a central rod.

Its subcellular location is the cell outer membrane. The protein localises to the bacterial flagellum basal body. Its function is as follows. Assembles around the rod to form the L-ring and probably protects the motor/basal body from shearing forces during rotation. The polypeptide is Flagellar L-ring protein (Desulfotalea psychrophila (strain LSv54 / DSM 12343)).